The chain runs to 155 residues: Putative pre-16S rRNA nuclease (155 aa).

It belongs to the YqgF nuclease family.

The protein resides in the cytoplasm. Its function is as follows. Could be a nuclease involved in processing of the 5'-end of pre-16S rRNA. This Xylella fastidiosa (strain M12) protein is Putative pre-16S rRNA nuclease.